The following is a 214-amino-acid chain: Neuromodulin (214 aa).

The segment at Met-1–Ala-214 is disordered. S-palmitoyl cysteine attachment occurs at residues Cys-3 and Cys-4. Basic and acidic residues-rich tracts occupy residues Lys-9–His-33, Met-52–Glu-88, and Leu-95–Pro-122. Residues Ala-32–Ser-61 enclose the IQ domain. Positions Glu-124–Glu-133 are enriched in low complexity. 3 stretches are compositionally biased toward basic and acidic residues: residues Gln-150–Val-160, Ala-168–Ala-193, and Glu-205–Ala-214.

It belongs to the neuromodulin family. As to quaternary structure, binds calmodulin with a greater affinity in the absence of Ca(2+) than in its presence. Post-translationally, palmitoylated. Palmitoylation is essential for plasma membrane association.

The protein resides in the cell membrane. The protein localises to the cell projection. It is found in the growth cone membrane. Its subcellular location is the synapse. It localises to the filopodium membrane. Its function is as follows. This protein is associated with nerve growth. It is a major component of the motile 'growth cones' that form the tips of elongating axons. Plays a role in axonal and dendritic filopodia induction. This is Neuromodulin (gap43) from Xenopus laevis (African clawed frog).